The sequence spans 115 residues: Meiotically up-regulated gene 168 protein (115 aa).

The segment at 82 to 115 is disordered; the sequence is SVSPVHTKAEEPGLGLTPMNSADFSNKIASRYRS. Positions 99–109 are enriched in polar residues; that stretch reads PMNSADFSNKI.

Its subcellular location is the nucleus. Its function is as follows. Has a role in meiosis. This chain is Meiotically up-regulated gene 168 protein (mug168), found in Schizosaccharomyces pombe (strain 972 / ATCC 24843) (Fission yeast).